Reading from the N-terminus, the 311-residue chain is tRNA dimethylallyltransferase (311 aa).

10–17 (GPTAVGKS) is an ATP binding site. 12 to 17 (TAVGKS) provides a ligand contact to substrate. Residues 35–38 (DSMQ) form an interaction with substrate tRNA region.

This sequence belongs to the IPP transferase family. As to quaternary structure, monomer. The cofactor is Mg(2+).

The catalysed reaction is adenosine(37) in tRNA + dimethylallyl diphosphate = N(6)-dimethylallyladenosine(37) in tRNA + diphosphate. In terms of biological role, catalyzes the transfer of a dimethylallyl group onto the adenine at position 37 in tRNAs that read codons beginning with uridine, leading to the formation of N6-(dimethylallyl)adenosine (i(6)A). This Carboxydothermus hydrogenoformans (strain ATCC BAA-161 / DSM 6008 / Z-2901) protein is tRNA dimethylallyltransferase.